A 239-amino-acid polypeptide reads, in one-letter code: MATTWPPRTVIRKSSGLRTLESALYRSGLGPVAGVDEVGRGACAGPLVVAACVLGPGKLESLAALDDSKKLTESVRERLFPVIRRYALAYHVVFIPPAEVDRRGVHVANIEGMRRAVAGLSLRPGYVLSDGFRVPGLAVPSLPVIGGDAVAACIAAASVLAKVSRDRLMVAMDAEHPGYGFADHKGYSTPAHSAALARLGPCPQHRHSFINVRRVANGSGGRVVADCKPDLPLQRDEGR.

The 192-residue stretch at 30–221 folds into the RNase H type-2 domain; that stretch reads GPVAGVDEVG…VRRVANGSGG (192 aa). A divalent metal cation-binding residues include D36, E37, and D130.

The protein belongs to the RNase HII family. Mn(2+) serves as cofactor. Mg(2+) is required as a cofactor.

Its subcellular location is the cytoplasm. It catalyses the reaction Endonucleolytic cleavage to 5'-phosphomonoester.. Endonuclease that specifically degrades the RNA of RNA-DNA hybrids. The protein is Ribonuclease HII of Mycolicibacterium paratuberculosis (strain ATCC BAA-968 / K-10) (Mycobacterium paratuberculosis).